Consider the following 405-residue polypeptide: Phosphopentomutase (405 aa).

6 residues coordinate Mn(2+): D10, D297, H302, D338, H339, and H350.

The protein belongs to the phosphopentomutase family. Mn(2+) serves as cofactor.

The protein localises to the cytoplasm. The enzyme catalyses 2-deoxy-alpha-D-ribose 1-phosphate = 2-deoxy-D-ribose 5-phosphate. It catalyses the reaction alpha-D-ribose 1-phosphate = D-ribose 5-phosphate. It functions in the pathway carbohydrate degradation; 2-deoxy-D-ribose 1-phosphate degradation; D-glyceraldehyde 3-phosphate and acetaldehyde from 2-deoxy-alpha-D-ribose 1-phosphate: step 1/2. Functionally, isomerase that catalyzes the conversion of deoxy-ribose 1-phosphate (dRib-1-P) and ribose 1-phosphate (Rib-1-P) to deoxy-ribose 5-phosphate (dRib-5-P) and ribose 5-phosphate (Rib-5-P), respectively. The polypeptide is Phosphopentomutase (Pseudoalteromonas translucida (strain TAC 125)).